The primary structure comprises 66 residues: uncharacterized protein (66 aa).

This is an uncharacterized protein from Vaccinia virus (strain Copenhagen) (VACV).